The chain runs to 98 residues: uncharacterized protein (98 aa).

The region spanning 1-85 is the STAS domain; it reads MLETVPVRCV…GTLKQALENM (85 aa).

In terms of processing, phosphorylated on threonine residue(s). Phosphorylated by PrkC and dephosphorylated by PrpC.

The protein resides in the cytoplasm. This is an uncharacterized protein from Bacillus subtilis (strain 168).